The primary structure comprises 390 residues: Putative 2-isopropylmalate synthase (390 aa).

The region spanning 5–267 (IIIFDTTLRD…KTNIKYQEIY (263 aa)) is the Pyruvate carboxyltransferase domain. Residues Asp14, His202, His204, and Asn238 each contribute to the Mn(2+) site.

It belongs to the alpha-IPM synthase/homocitrate synthase family. LeuA type 1 subfamily. Homodimer. The cofactor is Mn(2+).

The protein resides in the cytoplasm. It carries out the reaction 3-methyl-2-oxobutanoate + acetyl-CoA + H2O = (2S)-2-isopropylmalate + CoA + H(+). Its pathway is amino-acid biosynthesis; L-leucine biosynthesis; L-leucine from 3-methyl-2-oxobutanoate: step 1/4. Functionally, catalyzes the condensation of the acetyl group of acetyl-CoA with 3-methyl-2-oxobutanoate (2-ketoisovalerate) to form 3-carboxy-3-hydroxy-4-methylpentanoate (2-isopropylmalate). The chain is Putative 2-isopropylmalate synthase from Buchnera aphidicola subsp. Baizongia pistaciae (strain Bp).